Reading from the N-terminus, the 161-residue chain is Regulator of ribonuclease activity A (161 aa).

Belongs to the RraA family. In terms of assembly, homotrimer. Binds to both RNA-binding sites in the C-terminal region of Rne and to RhlB.

The protein resides in the cytoplasm. Functionally, globally modulates RNA abundance by binding to RNase E (Rne) and regulating its endonucleolytic activity. Can modulate Rne action in a substrate-dependent manner by altering the composition of the degradosome. Modulates RNA-binding and helicase activities of the degradosome. The protein is Regulator of ribonuclease activity A of Tolumonas auensis (strain DSM 9187 / NBRC 110442 / TA 4).